Consider the following 446-residue polypeptide: Probable glycine dehydrogenase (decarboxylating) subunit 1 (446 aa).

The protein belongs to the GcvP family. N-terminal subunit subfamily. As to quaternary structure, the glycine cleavage system is composed of four proteins: P, T, L and H. In this organism, the P 'protein' is a heterodimer of two subunits.

It carries out the reaction N(6)-[(R)-lipoyl]-L-lysyl-[glycine-cleavage complex H protein] + glycine + H(+) = N(6)-[(R)-S(8)-aminomethyldihydrolipoyl]-L-lysyl-[glycine-cleavage complex H protein] + CO2. Its function is as follows. The glycine cleavage system catalyzes the degradation of glycine. The P protein binds the alpha-amino group of glycine through its pyridoxal phosphate cofactor; CO(2) is released and the remaining methylamine moiety is then transferred to the lipoamide cofactor of the H protein. This chain is Probable glycine dehydrogenase (decarboxylating) subunit 1, found in Desulforamulus reducens (strain ATCC BAA-1160 / DSM 100696 / MI-1) (Desulfotomaculum reducens).